The sequence spans 467 residues: Cysteine--tRNA ligase (467 aa).

Cysteine 27 contributes to the Zn(2+) binding site. The 'HIGH' region signature appears at 29-39; it reads PTVYNYIHIGN. Zn(2+)-binding residues include cysteine 207, histidine 232, and glutamate 236. The 'KMSKS' region motif lies at 264–268; it reads KMSKS. An ATP-binding site is contributed by lysine 267.

Belongs to the class-I aminoacyl-tRNA synthetase family. Monomer. Zn(2+) serves as cofactor.

It is found in the cytoplasm. The catalysed reaction is tRNA(Cys) + L-cysteine + ATP = L-cysteinyl-tRNA(Cys) + AMP + diphosphate. This chain is Cysteine--tRNA ligase, found in Caldanaerobacter subterraneus subsp. tengcongensis (strain DSM 15242 / JCM 11007 / NBRC 100824 / MB4) (Thermoanaerobacter tengcongensis).